Reading from the N-terminus, the 535-residue chain is Thermosome subunit gamma (535 aa).

Belongs to the TCP-1 chaperonin family. As to quaternary structure, forms a Heterooligomeric complex of two stacked eight-membered rings.

In terms of biological role, molecular chaperone; binds unfolded polypeptides in vitro, and has a weak ATPase activity. In Saccharolobus solfataricus (strain ATCC 35092 / DSM 1617 / JCM 11322 / P2) (Sulfolobus solfataricus), this protein is Thermosome subunit gamma (thsC).